The primary structure comprises 364 residues: UDP-N-acetylglucosamine--N-acetylmuramyl-(pentapeptide) pyrophosphoryl-undecaprenol N-acetylglucosamine transferase (364 aa).

UDP-N-acetyl-alpha-D-glucosamine contacts are provided by residues 13-15 (TGG), N125, R165, S192, and Q293.

This sequence belongs to the glycosyltransferase 28 family. MurG subfamily.

The protein localises to the cell inner membrane. The enzyme catalyses di-trans,octa-cis-undecaprenyl diphospho-N-acetyl-alpha-D-muramoyl-L-alanyl-D-glutamyl-meso-2,6-diaminopimeloyl-D-alanyl-D-alanine + UDP-N-acetyl-alpha-D-glucosamine = di-trans,octa-cis-undecaprenyl diphospho-[N-acetyl-alpha-D-glucosaminyl-(1-&gt;4)]-N-acetyl-alpha-D-muramoyl-L-alanyl-D-glutamyl-meso-2,6-diaminopimeloyl-D-alanyl-D-alanine + UDP + H(+). It participates in cell wall biogenesis; peptidoglycan biosynthesis. In terms of biological role, cell wall formation. Catalyzes the transfer of a GlcNAc subunit on undecaprenyl-pyrophosphoryl-MurNAc-pentapeptide (lipid intermediate I) to form undecaprenyl-pyrophosphoryl-MurNAc-(pentapeptide)GlcNAc (lipid intermediate II). The chain is UDP-N-acetylglucosamine--N-acetylmuramyl-(pentapeptide) pyrophosphoryl-undecaprenol N-acetylglucosamine transferase from Cereibacter sphaeroides (strain ATCC 17029 / ATH 2.4.9) (Rhodobacter sphaeroides).